The sequence spans 367 residues: Pectate lyase 1 (367 aa).

The N-terminal stretch at 1-21 (MASPCLIAFLVFLCAIVSCCS) is a signal peptide. 2 disulfide bridges follow: cysteine 28–cysteine 45 and cysteine 128–cysteine 147. Asparagine 148 carries an N-linked (GlcNAc...) asparagine glycan. Residue aspartate 170 participates in Ca(2+) binding. Asparagine 178 carries N-linked (GlcNAc...) asparagine glycosylation. Ca(2+) is bound by residues aspartate 194 and aspartate 198. Arginine 250 is an active-site residue. A disulfide bridge connects residues cysteine 306 and cysteine 312.

It belongs to the polysaccharide lyase 1 family. Amb a subfamily. Requires Ca(2+) as cofactor.

The catalysed reaction is Eliminative cleavage of (1-&gt;4)-alpha-D-galacturonan to give oligosaccharides with 4-deoxy-alpha-D-galact-4-enuronosyl groups at their non-reducing ends.. It participates in glycan metabolism; pectin degradation; 2-dehydro-3-deoxy-D-gluconate from pectin: step 2/5. In terms of biological role, has pectate lyase activity. The chain is Pectate lyase 1 from Juniperus virginiana (Eastern redcedar).